We begin with the raw amino-acid sequence, 485 residues long: Peroxisomal catalase (485 aa).

Catalysis depends on residues His53 and Asn126. Residue Tyr336 participates in heme binding.

Belongs to the catalase family. In terms of assembly, homotetramer. Heme serves as cofactor.

The protein resides in the peroxisome matrix. It catalyses the reaction 2 H2O2 = O2 + 2 H2O. In terms of biological role, catalyzes the degradation of hydrogen peroxide (H(2)O(2)) generated by peroxisomal oxidases to water and oxygen, thereby protecting cells from the toxic effects of hydrogen peroxide. The polypeptide is Peroxisomal catalase (CAT1) (Candida albicans (strain SC5314 / ATCC MYA-2876) (Yeast)).